The chain runs to 240 residues: MSFEKLQKELHEAIEGVNRYNPENVADLAACVQAMVNENKYDKDIVLTILKLYQLNPEKYDEAVVRQVLLKTLMVLPSSDFALAKCLIDTNRLGSQELRRIFDLGAVLESCNFAVFWKLVKGAYKPTTNPNEPFKVPGEVPKMIKPMVGFEDAVKHYACRVISVTFQKIEKKMLSRLLGGASDKEVTALAQSFGWEAKENGDVFFVANHEGTIKTRNIDEKIQFPHVADLLTSIQPPLTL.

The 181-residue stretch at 41–221 (YDKDIVLTIL…TIKTRNIDEK (181 aa)) folds into the PCI domain.

It belongs to the eIF-3 subunit K family. As to quaternary structure, component of the eukaryotic translation initiation factor 3 (eIF-3) complex.

The protein localises to the cytoplasm. Component of the eukaryotic translation initiation factor 3 (eIF-3) complex, which is involved in protein synthesis of a specialized repertoire of mRNAs and, together with other initiation factors, stimulates binding of mRNA and methionyl-tRNAi to the 40S ribosome. The eIF-3 complex specifically targets and initiates translation of a subset of mRNAs involved in cell proliferation. In Caenorhabditis elegans, this protein is Eukaryotic translation initiation factor 3 subunit K.